A 688-amino-acid polypeptide reads, in one-letter code: Translation initiation factor IF-2 (688 aa).

The tract at residues 54–95 (KEKSEKTKEEDDEIETTAKNPIKESTNNKKPNKRDDKNEKVN) is disordered. The span at 86-95 (KRDDKNEKVN) shows a compositional bias: basic and acidic residues. One can recognise a tr-type G domain in the interval 187–354 (KRSPIITVMG…MILLSSEILE (168 aa)). The G1 stretch occupies residues 196–203 (GHVDHGKT). Position 196–203 (196–203 (GHVDHGKT)) interacts with GTP. The G2 stretch occupies residues 221–225 (GITQH). The interval 242 to 245 (DTPG) is G3. GTP contacts are provided by residues 242–246 (DTPGH) and 296–299 (NKID). The tract at residues 296–299 (NKID) is G4. The G5 stretch occupies residues 332–334 (SAH).

This sequence belongs to the TRAFAC class translation factor GTPase superfamily. Classic translation factor GTPase family. IF-2 subfamily.

The protein resides in the cytoplasm. Functionally, one of the essential components for the initiation of protein synthesis. Protects formylmethionyl-tRNA from spontaneous hydrolysis and promotes its binding to the 30S ribosomal subunits. Also involved in the hydrolysis of GTP during the formation of the 70S ribosomal complex. The polypeptide is Translation initiation factor IF-2 (Clostridium botulinum (strain Okra / Type B1)).